The primary structure comprises 822 residues: Molybdenum cofactor sulfurase (822 aa).

Residue Lys-245 is modified to N6-(pyridoxal phosphate)lysine. Cys-412 is an active-site residue. One can recognise an MOSC domain in the interval 658 to 814 (LRLIRQSSND…LKTYSPIKAI (157 aa)).

It belongs to the class-V pyridoxal-phosphate-dependent aminotransferase family. MOCOS subfamily. It depends on pyridoxal 5'-phosphate as a cofactor.

It carries out the reaction Mo-molybdopterin + L-cysteine + AH2 = thio-Mo-molybdopterin + L-alanine + A + H2O. The protein operates within cofactor biosynthesis; molybdopterin biosynthesis. In terms of biological role, sulfurates the molybdenum cofactor. Sulfation of molybdenum is essential for xanthine dehydrogenase (XDH) and aldehyde oxidase (ADO) enzymes in which molybdenum cofactor is liganded by 1 oxygen and 1 sulfur atom in active form. In Bombyx mori (Silk moth), this protein is Molybdenum cofactor sulfurase.